The following is a 426-amino-acid chain: Dihydroorotase (426 aa).

Positions 61 and 63 each coordinate Zn(2+). Residues 63-65 (HCR) and Asn95 each bind substrate. Zn(2+)-binding residues include Glu146, His180, His229, and Asp297. Residue Asp297 is part of the active site. His301 contacts substrate.

This sequence belongs to the metallo-dependent hydrolases superfamily. DHOase family. Class I DHOase subfamily. Zn(2+) is required as a cofactor.

It catalyses the reaction (S)-dihydroorotate + H2O = N-carbamoyl-L-aspartate + H(+). It functions in the pathway pyrimidine metabolism; UMP biosynthesis via de novo pathway; (S)-dihydroorotate from bicarbonate: step 3/3. Functionally, catalyzes the reversible cyclization of carbamoyl aspartate to dihydroorotate. The polypeptide is Dihydroorotase (Methanopyrus kandleri (strain AV19 / DSM 6324 / JCM 9639 / NBRC 100938)).